Reading from the N-terminus, the 120-residue chain is Large ribosomal subunit protein uL18 (120 aa).

The protein belongs to the universal ribosomal protein uL18 family. In terms of assembly, part of the 50S ribosomal subunit; part of the 5S rRNA/L5/L18/L25 subcomplex. Contacts the 5S and 23S rRNAs.

This is one of the proteins that bind and probably mediate the attachment of the 5S RNA into the large ribosomal subunit, where it forms part of the central protuberance. In Nitrobacter hamburgensis (strain DSM 10229 / NCIMB 13809 / X14), this protein is Large ribosomal subunit protein uL18.